Here is a 38-residue protein sequence, read N- to C-terminus: Photosystem II reaction center protein T (38 aa).

A helical membrane pass occupies residues A3–F23.

This sequence belongs to the PsbT family. As to quaternary structure, PSII is composed of 1 copy each of membrane proteins PsbA, PsbB, PsbC, PsbD, PsbE, PsbF, PsbH, PsbI, PsbJ, PsbK, PsbL, PsbM, PsbT, PsbY, PsbZ, Psb30/Ycf12, at least 3 peripheral proteins of the oxygen-evolving complex and a large number of cofactors. It forms dimeric complexes.

It is found in the plastid. It localises to the chloroplast thylakoid membrane. Found at the monomer-monomer interface of the photosystem II (PS II) dimer, plays a role in assembly and dimerization of PSII. PSII is a light-driven water plastoquinone oxidoreductase, using light energy to abstract electrons from H(2)O, generating a proton gradient subsequently used for ATP formation. The chain is Photosystem II reaction center protein T from Secale cereale (Rye).